The primary structure comprises 165 residues: Transcriptional repressor NrdR (165 aa).

A zinc finger spans residues 3–34 (CPFCSANDTKVIDSRLVSDGHQVRRRRECLAC). The region spanning 49-139 (PRIIKRDGSR…VYLSFEDISE (91 aa)) is the ATP-cone domain.

Belongs to the NrdR family. It depends on Zn(2+) as a cofactor.

Its function is as follows. Negatively regulates transcription of bacterial ribonucleotide reductase nrd genes and operons by binding to NrdR-boxes. The polypeptide is Transcriptional repressor NrdR (Colwellia psychrerythraea (strain 34H / ATCC BAA-681) (Vibrio psychroerythus)).